The sequence spans 240 residues: Small ribosomal subunit protein uS3m (240 aa).

Belongs to the universal ribosomal protein uS3 family.

The protein resides in the mitochondrion. This Chondrus crispus (Carrageen Irish moss) protein is Small ribosomal subunit protein uS3m (RPS3).